The sequence spans 807 residues: MNSSNNNDSSSSNSNMNNSLSPTLVTHSDASMGSGRASPDNSHMGRGIWNPSYVNQGSQRSPQQQHQNHHQQQQQQQQQQQQNSQFCFVNPWNEEKVTNSQQNLVYPPQYDDLNSNESLDAYRRRKSSLVVPPARAPAPNPFQYDSYPAYTSSNTSLAGNSSGQYPSGYQQQQQQVYQQGAIHPSQFGSRFVPSLYDRQDFQRRQSLAATNYSSNFSSLNSNTNQGTNSIPVMSPYRRLSAYPPSTSPPLQPPFKQLRRDEVQGQKLSIPQMQLCNSKNDLQPVLNATPKFRRASLNSKTISPLVSVTKSLITTYSLCSPEFTYQTSKNPKRVLTKPSEGKCNNGFDNINSDYILYVNDVLGVEQNRKYLVLDILGQGTFGQVVKCQNLLTKEILAVKVVKSRTEYLTQSITEAKILELLNQKIDPTNKHHFLRMYDSFVHKNHLCLVFELLSNNLYELLKQNKFHGLSIQLIRTFTTQILDSLCVLKESKLIHCDLKPENILLCAPDKPELKIIDFGSSCEEARTVYTYIQSRFYRAPEIILGIPYSTSIDMWSLGCIVAELFLGIPIFPGASEYNQLTRIIDTLGYPPSWMIDMGKNSGKFMKKLAPEESSSSTQKHRMKTIEEFCREYNIVEKPSKQYFKWRKLPDIIRNYRYPKSIQNSQELIDQEMQNRECLIHFLGGVLNLNPLERWTPQQAMLHPFITKQEFTGEWFPPGSSLPGPSEKHDDAKGQQSEYGSANDSSNNAGHNYVYNPSSATGGADSVDIGAISKRKENTSGDISNNFAVTHSVQEGPTSAFNKLHIVEE.

Over residues Met-1–Ser-19 the composition is skewed to low complexity. Residues Met-1–Ser-84 are disordered. The span at Leu-20–Ser-31 shows a compositional bias: polar residues. Ser-38 bears the Phosphoserine mark. A compositionally biased stretch (low complexity) spans Asn-55 to Ser-84. Phosphoserine occurs at positions 115, 118, and 127. Residues Arg-124–Gly-180 form a disordered region. The span at Ala-149 to Asn-160 shows a compositional bias: polar residues. Positions Ser-161–Gly-180 are enriched in low complexity. Phosphoserine is present on Ser-206. The span at Ser-214 to Asn-224 shows a compositional bias: low complexity. The segment at Ser-214 to Phe-254 is disordered. Phosphoserine is present on residues Ser-240, Ser-245, and Ser-247. Thr-288 is modified (phosphothreonine). Ser-295 carries the phosphoserine modification. The Protein kinase domain occupies Tyr-369–Ile-704. ATP contacts are provided by residues Leu-375 to Val-383 and Lys-398. Asp-496 functions as the Proton acceptor in the catalytic mechanism. At Tyr-530 the chain carries Phosphotyrosine. The disordered stretch occupies residues Phe-714–Ala-758. The span at Gly-732–Ala-758 shows a compositional bias: polar residues.

The protein belongs to the protein kinase superfamily. CMGC Ser/Thr protein kinase family. MNB/DYRK subfamily. In terms of processing, phosphorylated; highly.

The protein localises to the cytoplasm. It localises to the nucleus. It carries out the reaction L-seryl-[protein] + ATP = O-phospho-L-seryl-[protein] + ADP + H(+). The enzyme catalyses L-threonyl-[protein] + ATP = O-phospho-L-threonyl-[protein] + ADP + H(+). It catalyses the reaction L-tyrosyl-[protein] + ATP = O-phospho-L-tyrosyl-[protein] + ADP + H(+). Negative regulator of the cell cycle acting downstream of the cAMP-dependent protein kinase. Part of a glucose-sensing system involved in growth control in response to glucose availability. Phosphorylates POP2. This chain is Dual specificity protein kinase YAK1 (YAK1), found in Saccharomyces cerevisiae (strain ATCC 204508 / S288c) (Baker's yeast).